Here is a 491-residue protein sequence, read N- to C-terminus: Cysteine--tRNA ligase (491 aa).

Cysteine 29 lines the Zn(2+) pocket. Positions 31–41 (PTVYDFAHIGN) match the 'HIGH' region motif. Positions 227, 252, and 256 each coordinate Zn(2+). The 'KMSKS' region motif lies at 285–289 (KMSKS). An ATP-binding site is contributed by lysine 288.

Belongs to the class-I aminoacyl-tRNA synthetase family. In terms of assembly, monomer. Zn(2+) is required as a cofactor.

Its subcellular location is the cytoplasm. The enzyme catalyses tRNA(Cys) + L-cysteine + ATP = L-cysteinyl-tRNA(Cys) + AMP + diphosphate. The chain is Cysteine--tRNA ligase from Rhodopseudomonas palustris (strain TIE-1).